The following is a 1538-amino-acid chain: Lysophospholipase nte1 (1538 aa).

Over methionine 1–glycine 74 the chain is Cytoplasmic. Residues tryptophan 75–isoleucine 95 form a helical membrane-spanning segment. Residues threonine 96 to threonine 117 lie on the Lumenal side of the membrane. A helical membrane pass occupies residues methionine 118–isoleucine 138. At arginine 139–isoleucine 1538 the chain is on the cytoplasmic side. Disordered stretches follow at residues lysine 242 to valine 264, glutamate 302 to histidine 393, and alanine 529 to leucine 559. A compositionally biased stretch (low complexity) spans glutamate 302 to serine 314. The span at glycine 329–serine 345 shows a compositional bias: basic and acidic residues. A nucleoside 3',5'-cyclic phosphate is bound by residues glycine 692–valine 811 and arginine 856–arginine 976. Positions leucine 1235–lysine 1399 constitute a PNPLA domain. The short motif at glycine 1239–glycine 1244 is the GXGXXG element. Residues glycine 1266–glycine 1270 carry the GXSXG motif. The active-site Nucleophile is serine 1268. Catalysis depends on aspartate 1386, which acts as the Proton acceptor. The short motif at aspartate 1386–glycine 1388 is the DGA/G element. A disordered region spans residues leucine 1517–isoleucine 1538.

This sequence belongs to the NTE family.

It localises to the endoplasmic reticulum membrane. The catalysed reaction is a 1-acyl-sn-glycero-3-phosphocholine + H2O = sn-glycerol 3-phosphocholine + a fatty acid + H(+). Inhibited by organophosphorus esters. Its function is as follows. Intracellular phospholipase B that catalyzes the double deacylation of phosphatidylcholine (PC) to glycerophosphocholine (GroPCho). Plays an important role in membrane lipid homeostasis. Responsible for the rapid PC turnover in response to inositol, elevated temperatures, or when choline is present in the growth medium. The chain is Lysophospholipase nte1 (nte1) from Aspergillus oryzae (strain ATCC 42149 / RIB 40) (Yellow koji mold).